The sequence spans 379 residues: Queuine tRNA-ribosyltransferase (379 aa).

Residue Asp94 is the Proton acceptor of the active site. Substrate is bound by residues 94 to 98 (DSGGF), Asp148, Gln191, and Gly218. Residues 249–255 (GVGSPDS) are RNA binding. The active-site Nucleophile is the Asp268. Residues 273-277 (TRIAR) are RNA binding; important for wobble base 34 recognition. Zn(2+)-binding residues include Cys306, Cys308, Cys311, and His337.

Belongs to the queuine tRNA-ribosyltransferase family. In terms of assembly, homodimer. Within each dimer, one monomer is responsible for RNA recognition and catalysis, while the other monomer binds to the replacement base PreQ1. Zn(2+) is required as a cofactor.

The catalysed reaction is 7-aminomethyl-7-carbaguanine + guanosine(34) in tRNA = 7-aminomethyl-7-carbaguanosine(34) in tRNA + guanine. The protein operates within tRNA modification; tRNA-queuosine biosynthesis. In terms of biological role, catalyzes the base-exchange of a guanine (G) residue with the queuine precursor 7-aminomethyl-7-deazaguanine (PreQ1) at position 34 (anticodon wobble position) in tRNAs with GU(N) anticodons (tRNA-Asp, -Asn, -His and -Tyr). Catalysis occurs through a double-displacement mechanism. The nucleophile active site attacks the C1' of nucleotide 34 to detach the guanine base from the RNA, forming a covalent enzyme-RNA intermediate. The proton acceptor active site deprotonates the incoming PreQ1, allowing a nucleophilic attack on the C1' of the ribose to form the product. After dissociation, two additional enzymatic reactions on the tRNA convert PreQ1 to queuine (Q), resulting in the hypermodified nucleoside queuosine (7-(((4,5-cis-dihydroxy-2-cyclopenten-1-yl)amino)methyl)-7-deazaguanosine). The sequence is that of Queuine tRNA-ribosyltransferase from Bacillus anthracis (strain CDC 684 / NRRL 3495).